A 239-amino-acid chain; its full sequence is MSSPITPLSPGCVMLPARPEPVPVDPKTTAVIVIDMQNAYASPGGYLDLAGFDISGAAKVIHEIKGVLEVARSAGMQVIYFQNGWDDQYVEAGGPGSPNWWKSNALKTMRAKPELQGKLLARGQWDYELVDELKPQPGDIQLHKTRYSGFFNSQLDSVLRARGIRHLVFVGIATNVCVESTLRDGFFLEYFGTVLEDATHQAGPEFVQKAALFNIESFFGWVSTTADFKGTFGQLAPRT.

Residue aspartate 35 is the Proton acceptor of the active site. Lysine 144 is a catalytic residue. Catalysis depends on cysteine 177, which acts as the Nucleophile.

It belongs to the isochorismatase family. RutB subfamily.

It carries out the reaction (Z)-3-ureidoacrylate + H2O + H(+) = (Z)-3-aminoacrylate + NH4(+) + CO2. The enzyme catalyses (Z)-3-ureidoacrylate + H2O = (Z)-3-aminoacrylate + carbamate + H(+). The catalysed reaction is (Z)-2-methylureidoacrylate + H2O + H(+) = (Z)-2-methylaminoacrylate + NH4(+) + CO2. In terms of biological role, hydrolyzes ureidoacrylate to form aminoacrylate and carbamate. The carbamate hydrolyzes spontaneously, thereby releasing one of the nitrogen atoms of the pyrimidine ring as ammonia and one of its carbon atoms as CO2. This chain is Ureidoacrylate amidohydrolase RutB, found in Caulobacter segnis (strain ATCC 21756 / DSM 7131 / JCM 7823 / NBRC 15250 / LMG 17158 / TK0059) (Mycoplana segnis).